A 473-amino-acid chain; its full sequence is Transposase for insertion sequence element IS1151 (473 aa).

The protein belongs to the transposase 11 family.

Its function is as follows. Involved in the transposition of the insertion sequence. This chain is Transposase for insertion sequence element IS1151 (tnp), found in Clostridium perfringens.